The primary structure comprises 1037 residues: Tyrosine-protein kinase-like otk (1037 aa).

The N-terminal stretch at 1-23 is a signal peptide; the sequence is MDMDVMMISMCILASTFMAPGWA. 5 consecutive Ig-like C2-type domains span residues 24–109, 110–199, 251–365, 368–464, and 469–559; these read STSG…REAS, PPAK…RVMS, PEDL…APLN, PGLL…VSIN, and PKFS…VQLV. Residues 24 to 582 lie on the Extracellular side of the membrane; that stretch reads STSGFLRVPQ…GGDGFLVTRA (559 aa). 5 disulfide bridges follow: Cys47–Cys96, Cys138–Cys188, Cys276–Cys354, Cys399–Cys448, and Cys491–Cys543. N-linked (GlcNAc...) asparagine glycans are attached at residues Asn336, Asn418, Asn430, Asn445, Asn513, and Asn525. Residues 583-603 form a helical membrane-spanning segment; it reads VLITMTVALAYIVLVVGLMLW. At 604–1037 the chain is on the cytoplasmic side; that stretch reads CRYRRQARKA…SKAMQSVAEK (434 aa). Disordered regions lie at residues 623 to 683 and 720 to 777; these read AGGD…KSVY and SAQS…KEEE. Polar residues predominate over residues 658-676; that stretch reads KSNGDAQKSDDTACSQQSR. The residue at position 681 (Ser681) is a Phosphoserine. Residues 693 to 1031 enclose the Protein kinase; inactive domain; the sequence is LSELLQIGRG…QLGSALSKAM (339 aa). Residues 723–734 are compositionally biased toward basic and acidic residues; that stretch reads SDKDADTEKQHS. The segment covering 739 to 749 has biased composition (gly residues); it reads GSGGSGSGSGS. Residues 768–777 show a composition bias toward acidic residues; sequence DDIEEIKEEE.

This sequence belongs to the protein kinase superfamily. Tyr protein kinase family. Insulin receptor subfamily. In terms of assembly, interacts with plexA; component of a receptor complex that mediates the repulsive signaling in response to Semaphorin ligands.

It localises to the cell membrane. In terms of biological role, acts as a calcium-dependent, homophilic cell adhesion molecule that regulates neural recognition during the development of the nervous system. Component of the repulsive Plexin signaling response to regulate motor axon guidance at the embryonic stage. Also component of a receptor complex that is required in the adult visual system to innervate the lamina layer; specific targeting of R1-R6 axons. In Drosophila pseudoobscura pseudoobscura (Fruit fly), this protein is Tyrosine-protein kinase-like otk.